The chain runs to 432 residues: Sensor histidine kinase YrkQ (432 aa).

Residues 1 to 12 are Cytoplasmic-facing; the sequence is MAHLKFTLTKKL. The chain crosses the membrane as a helical span at residues 13–33; sequence ALLIMVAAIVSGVIFLTLQKI. Over 34–145 the chain is Extracellular; it reads TDDLIEGYLS…GFYSSRYYDL (112 aa). A helical membrane pass occupies residues 146-166; sequence AFALDLLGATLIFLIIVLFGI. An HAMP domain is found at 167 to 219; it reads RQSLRYLKTIHQEIHILEGGELDYEMTIKGHDELAMIAKSIEDLRKAFLDKLK. Residues 167-432 are Cytoplasmic-facing; it reads RQSLRYLKTI…IVLRFWNTKM (266 aa). The region spanning 234 to 432 is the Histidine kinase domain; it reads EMSHDMRTPL…IVLRFWNTKM (199 aa). H237 carries the phosphohistidine; by autocatalysis modification.

The protein localises to the cell membrane. It carries out the reaction ATP + protein L-histidine = ADP + protein N-phospho-L-histidine.. Its function is as follows. Member of the two-component regulatory system YrkQ/YrkP. Probably activates YrkP by phosphorylation. In Bacillus subtilis (strain 168), this protein is Sensor histidine kinase YrkQ (yrkQ).